Here is a 489-residue protein sequence, read N- to C-terminus: Rhamnulokinase (489 aa).

13-17 (ASSGR) is an ATP binding site. A disulfide bridge connects residues C68 and C222. Substrate is bound by residues G83 and 236–238 (HDT). The active-site Proton acceptor is the D237. T259 lines the ATP pocket. N296 contributes to the substrate binding site. Q304 provides a ligand contact to ATP. C353 and C370 are oxidised to a cystine. Position 402 (G402) interacts with ATP. C413 and C417 form a disulfide bridge.

This sequence belongs to the rhamnulokinase family. Mg(2+) serves as cofactor.

It carries out the reaction L-rhamnulose + ATP = L-rhamnulose 1-phosphate + ADP + H(+). It functions in the pathway carbohydrate degradation; L-rhamnose degradation; glycerone phosphate from L-rhamnose: step 2/3. Functionally, involved in the catabolism of L-rhamnose (6-deoxy-L-mannose). Catalyzes the transfer of the gamma-phosphate group from ATP to the 1-hydroxyl group of L-rhamnulose to yield L-rhamnulose 1-phosphate. This is Rhamnulokinase from Salmonella dublin (strain CT_02021853).